Consider the following 417-residue polypeptide: Hydroxysqualene dehydroxylase (417 aa).

Belongs to the HpnE family.

It carries out the reaction squalene + FAD + H2O + H(+) = hydroxysqualene + FADH2. Its pathway is secondary metabolite biosynthesis; hopanoid biosynthesis. Functionally, involved in the biosynthesis of the hopanoid precursor squalene (SQ) from farnesyl diphosphate (FPP). Catalyzes the third (last) step, the reduction of hydroxysqualene (HSQ) to SQ. In Sinorhizobium fredii (strain NBRC 101917 / NGR234), this protein is Hydroxysqualene dehydroxylase.